The following is a 525-amino-acid chain: GMP synthase [glutamine-hydrolyzing] (525 aa).

The Glutamine amidotransferase type-1 domain occupies 11-200 (PVLVVDFGAQ…LTEIAGLEQN (190 aa)). Cys-88 acts as the Nucleophile in catalysis. Residues His-174 and Glu-176 contribute to the active site. Residues 201-399 (WTAANIAEEL…LGLPEEIVNR (199 aa)) enclose the GMPS ATP-PPase domain. 229-235 (SGGVDSA) lines the ATP pocket.

As to quaternary structure, homodimer.

It carries out the reaction XMP + L-glutamine + ATP + H2O = GMP + L-glutamate + AMP + diphosphate + 2 H(+). Its pathway is purine metabolism; GMP biosynthesis; GMP from XMP (L-Gln route): step 1/1. Functionally, catalyzes the synthesis of GMP from XMP. In Corynebacterium diphtheriae (strain ATCC 700971 / NCTC 13129 / Biotype gravis), this protein is GMP synthase [glutamine-hydrolyzing].